The primary structure comprises 999 residues: Cytoplasmic dynein 2 intermediate chain 1 (999 aa).

Composition is skewed to basic and acidic residues over residues 1–19 (MEPG…DDLR), 29–138 (PKEE…EEIR), 146–260 (LLSR…EDRH), and 268–300 (GLHY…KELE). Residues 1–350 (MEPGKRRTKD…EHEAREKAEE (350 aa)) are disordered. Residue S250 is modified to Phosphoserine. Residues 318-338 (LEDDFVDYEDDFEVCDGDDDS) are compositionally biased toward acidic residues. A compositionally biased stretch (basic and acidic residues) spans 339–350 (NNEHEAREKAEE). Residues 416 to 495 (ASHRQKSRSQ…DIQTEDIETR (80 aa)) form a binding to the DYNLT2B-DYNLT1/DYNLT3 dimer region. WD repeat units follow at residues 637–677 (ICES…RIHH), 718–764 (AYKK…KADI), 850–890 (VRPI…PIMQ), and 895–935 (TSGH…LGPV).

The protein belongs to the dynein light intermediate chain family. Intermediate chain of the cytoplasmic dynein complex 2, a multisubunit complex, composed at least of eleven different proteins. The cytoplasmic dynein 2 complex consists of two catalytic heavy chains (HCs) and a number of non-catalytic subunits presented by intermediate chains (ICs), light intermediate chains (LICs) and light chains (LCs). Among them, a heavy chain (DYNC2H1), two intermediate chains (DYNC2I2 and DYNC2I1), a light intermediate chain (DYNC2LI1), and a light chain (DYNLT2B) are unique to the cytoplasmic dynein complex 2, but a subset of the light chains are also shared by dynein-1 and dynein-2 complexes. Interacts with DYNC2I2; their C-terminal domains each bind a copy of the heavy chain, and their extended N-terminal regions are held together by an array of light chain dimers. Interacts with DYNLT2B. Interacts (via the N-terminal half) with DYNLT2B-DYNLT1 dimer or with DYNLT2B-DYNLT3 dimer; this interaction is crucial for retrograde trafficking of ciliary proteins.

It is found in the cell projection. It localises to the cilium. The protein resides in the cytoplasm. The protein localises to the cytoskeleton. Its subcellular location is the microtubule organizing center. It is found in the centrosome. Its function is as follows. Acts as one of several non-catalytic accessory components of the cytoplasmic dynein 2 complex (dynein-2 complex), a motor protein complex that drives the movement of cargos along microtubules within cilia and flagella in concert with the intraflagellar transport (IFT) system. DYNC2I1 plays a major role in retrograde ciliary protein trafficking in cilia and flagella. Also requires to maintain a functional transition zone. The sequence is that of Cytoplasmic dynein 2 intermediate chain 1 (Dync2i1) from Mus musculus (Mouse).